Here is a 65-residue protein sequence, read N- to C-terminus: Metallothionein-like protein 3B (65 aa).

The protein belongs to the metallothionein superfamily. Type 15 family. Expressed in leaves and rachis.

Its function is as follows. Metallothioneins have a high content of cysteine residues that bind various heavy metals. The protein is Metallothionein-like protein 3B (MT3B) of Oryza sativa subsp. japonica (Rice).